A 238-amino-acid chain; its full sequence is Exosome complex exonuclease RRP46 homolog (238 aa).

Residues 174–194 (SRKSASSKEPNQKEEDSERGL) are disordered. Positions 183 to 192 (PNQKEEDSER) are enriched in basic and acidic residues.

This sequence belongs to the RNase PH family. As to quaternary structure, homodimer or monomer when reduced or oxidized, respectively. Component of the exosome core complex.

It localises to the nucleus. It is found in the nucleolus. Probable component of the exosome 3'-&gt;5' exoribonuclease complex, a complex that degrades inherently unstable mRNAs containing AU-rich elements (AREs) within their 3'-untranslated regions. May form a homodimer separately from exosome complexes and function in DNA cleavage process. Binds double-stranded DNA (dsDNA) and single-stranded RNA (ssRNA), and possesses hydrolytic DNase and phosphorolytic RNase activities in vitro. The protein is Exosome complex exonuclease RRP46 homolog (RRP46) of Oryza sativa subsp. japonica (Rice).